The chain runs to 605 residues: Cell wall integrity and stress response component 4 (605 aa).

The N-terminal stretch at 1 to 26 (MQTSMVSAKVSIWLVCSVICSSLVRA) is a signal peptide. Residues 27-110 (TQSVCSSQNT…DKDLFGYIYL (84 aa)) form the WSC domain. A disordered region spans residues 151 to 305 (SPTLTSTSTT…PSSTTVTYTS (155 aa)). 4 N-linked (GlcNAc...) asparagine glycosylation sites follow: Asn340, Asn386, Asn389, and Asn398. Positions 381 to 399 (RITNNNNSNTTNSNTPTNK) are enriched in low complexity. The interval 381–404 (RITNNNNSNTTNSNTPTNKSTEKK) is disordered. The chain crosses the membrane as a helical span at residues 415 to 435 (ATFVVVGVVCLVIICILIYLI). Asn479 carries an N-linked (GlcNAc...) asparagine glycan. The tract at residues 494-521 (GQIMSESPSPRQSTYSLTAGSPPNDPST) is disordered. Polar residues predominate over residues 497–521 (MSESPSPRQSTYSLTAGSPPNDPST). N-linked (GlcNAc...) asparagine glycosylation is found at Asn553 and Asn583.

It is found in the membrane. This Saccharomyces cerevisiae (strain ATCC 204508 / S288c) (Baker's yeast) protein is Cell wall integrity and stress response component 4 (WSC4).